A 414-amino-acid polypeptide reads, in one-letter code: Tryptophan synthase beta chain (414 aa).

Residues 1 to 28 form a disordered region; it reads MVSTISRQDQNNNDDLNQPSKEGRFGKY. Residues 8–18 show a composition bias toward low complexity; that stretch reads QDQNNNDDLNQ. Lys-108 carries the post-translational modification N6-(pyridoxal phosphate)lysine.

This sequence belongs to the TrpB family. Tetramer of two alpha and two beta chains. Requires pyridoxal 5'-phosphate as cofactor.

It carries out the reaction (1S,2R)-1-C-(indol-3-yl)glycerol 3-phosphate + L-serine = D-glyceraldehyde 3-phosphate + L-tryptophan + H2O. The protein operates within amino-acid biosynthesis; L-tryptophan biosynthesis; L-tryptophan from chorismate: step 5/5. The beta subunit is responsible for the synthesis of L-tryptophan from indole and L-serine. This chain is Tryptophan synthase beta chain, found in Prochlorococcus marinus subsp. pastoris (strain CCMP1986 / NIES-2087 / MED4).